The following is a 67-amino-acid chain: Minor structural pilin EpdD (67 aa).

Residues 1 to 13 (MSVALKKFFSKRG) constitute a propeptide that is removed on maturation. The QXSXEXXXL signature appears at 14–22 (QLSLEFSVL).

Post-translationally, the N-terminus is cleaved by the prepilin peptidase EppA, which recognizes the class III signal sequence. In terms of processing, N-glycosylated. Glycosylation is AglB-dependent. The N-glycosylation does not occur unless the signal peptide has been cleaved first.

It is found in the secreted. The protein localises to the cell surface. The protein resides in the fimbrium. In terms of biological role, minor component of the type IV-like pili. Essential for pili formation. This Methanococcus maripaludis (strain DSM 14266 / JCM 13030 / NBRC 101832 / S2 / LL) protein is Minor structural pilin EpdD.